The sequence spans 363 residues: Exopolygalacturonase rpg13 (363 aa).

The N-terminal stretch at 1 to 26 (MVKFLSLTSSVTALLLLSLGANGVAA) is a signal peptide. 3 N-linked (GlcNAc...) asparagine glycosylation sites follow: Asn121, Asn142, and Asn150. PbH1 repeat units follow at residues 143–173 (ATDV…DVSR), 174–195 (SSNV…AINE), 197–217 (VTNV…SVGS), 227–248 (VKTV…RIKT), and 256–277 (VSDI…LITT). Asp188 (proton donor) is an active-site residue. Cys190 and Cys207 form a disulfide bridge. A glycan (N-linked (GlcNAc...) asparagine) is linked at Asn199. Residue His211 is part of the active site. Asn321 carries an N-linked (GlcNAc...) asparagine glycan. Cys322 and Cys328 form a disulfide bridge. One copy of the PbH1 6 repeat lies at 328-354 (CTDFTLSGVKITKASNTPKNVCVNLDG).

It belongs to the glycosyl hydrolase 28 family. N-glycosylated.

It is found in the secreted. The enzyme catalyses [(1-&gt;4)-alpha-D-galacturonosyl](n) + H2O = alpha-D-galacturonate + [(1-&gt;4)-alpha-D-galacturonosyl](n-1). In terms of biological role, specific in hydrolyzing the terminal glycosidic bond of polygalacturonic acid and oligogalacturonates. Has no activity towards trigalacturonic acid. The sequence is that of Exopolygalacturonase rpg13 from Rhizopus delemar (strain RA 99-880 / ATCC MYA-4621 / FGSC 9543 / NRRL 43880) (Mucormycosis agent).